The chain runs to 417 residues: Serine hydroxymethyltransferase (417 aa).

Residues Leu121 and 125 to 127 (GHL) each bind (6S)-5,6,7,8-tetrahydrofolate. Lys229 carries the post-translational modification N6-(pyridoxal phosphate)lysine. A (6S)-5,6,7,8-tetrahydrofolate-binding site is contributed by 355-357 (SPF).

The protein belongs to the SHMT family. As to quaternary structure, homodimer. Pyridoxal 5'-phosphate serves as cofactor.

The protein localises to the cytoplasm. The catalysed reaction is (6R)-5,10-methylene-5,6,7,8-tetrahydrofolate + glycine + H2O = (6S)-5,6,7,8-tetrahydrofolate + L-serine. It functions in the pathway one-carbon metabolism; tetrahydrofolate interconversion. It participates in amino-acid biosynthesis; glycine biosynthesis; glycine from L-serine: step 1/1. In terms of biological role, catalyzes the reversible interconversion of serine and glycine with tetrahydrofolate (THF) serving as the one-carbon carrier. This reaction serves as the major source of one-carbon groups required for the biosynthesis of purines, thymidylate, methionine, and other important biomolecules. Also exhibits THF-independent aldolase activity toward beta-hydroxyamino acids, producing glycine and aldehydes, via a retro-aldol mechanism. This is Serine hydroxymethyltransferase from Shewanella sp. (strain MR-4).